A 353-amino-acid polypeptide reads, in one-letter code: UPF0283 membrane protein YcjF (353 aa).

Transmembrane regions (helical) follow at residues 70–90, 100–120, and 213–233; these read MVMG…VQWT, VALG…GSVV, and ESTL…FIAW.

Belongs to the UPF0283 family.

Its subcellular location is the cell inner membrane. In Escherichia coli O45:K1 (strain S88 / ExPEC), this protein is UPF0283 membrane protein YcjF.